The primary structure comprises 35 residues: Photosystem II reaction center protein T (35 aa).

Residues 3–23 (ALVYTFLLVSTLGIIFFAIFF) form a helical membrane-spanning segment.

This sequence belongs to the PsbT family. PSII is composed of 1 copy each of membrane proteins PsbA, PsbB, PsbC, PsbD, PsbE, PsbF, PsbH, PsbI, PsbJ, PsbK, PsbL, PsbM, PsbT, PsbY, PsbZ, Psb30/Ycf12, at least 3 peripheral proteins of the oxygen-evolving complex and a large number of cofactors. It forms dimeric complexes.

The protein resides in the plastid. The protein localises to the chloroplast thylakoid membrane. Functionally, found at the monomer-monomer interface of the photosystem II (PS II) dimer, plays a role in assembly and dimerization of PSII. PSII is a light-driven water plastoquinone oxidoreductase, using light energy to abstract electrons from H(2)O, generating a proton gradient subsequently used for ATP formation. The polypeptide is Photosystem II reaction center protein T (Pisum sativum (Garden pea)).